The sequence spans 350 residues: UDP-N-acetylenolpyruvoylglucosamine reductase (350 aa).

Positions 24–195 constitute an FAD-binding PCMH-type domain; sequence HVDATARWLL…VAVEFNLPLL (172 aa). Residue arginine 172 is part of the active site. Catalysis depends on serine 245, which acts as the Proton donor. Glutamate 342 is a catalytic residue.

The protein belongs to the MurB family. FAD is required as a cofactor.

The protein resides in the cytoplasm. The enzyme catalyses UDP-N-acetyl-alpha-D-muramate + NADP(+) = UDP-N-acetyl-3-O-(1-carboxyvinyl)-alpha-D-glucosamine + NADPH + H(+). The protein operates within cell wall biogenesis; peptidoglycan biosynthesis. Its function is as follows. Cell wall formation. In Xanthomonas campestris pv. campestris (strain B100), this protein is UDP-N-acetylenolpyruvoylglucosamine reductase.